Consider the following 225-residue polypeptide: Endo-1,4-beta-xylanase (225 aa).

Residues 1–31 (MVGFTPVALAALAATGALAFPAGNATELEKR) form the signal peptide. At Gln-32 the chain carries Pyrrolidone carboxylic acid. The 191-residue stretch at 32 to 222 (QTTPNSEGWH…SSGYARITVA (191 aa)) folds into the GH11 domain. The active-site Nucleophile is the Glu-117. Cys-141 and Cys-185 are oxidised to a cystine. Catalysis depends on Glu-209, which acts as the Proton donor.

It catalyses the reaction Endohydrolysis of (1-&gt;4)-beta-D-xylosidic linkages in xylans.. The protein operates within glycan degradation; xylan degradation. The protein is Endo-1,4-beta-xylanase (XYNA) of Thermomyces lanuginosus (Humicola lanuginosa).